Reading from the N-terminus, the 642-residue chain is tRNA uridine 5-carboxymethylaminomethyl modification enzyme MnmG (642 aa).

Residue 24–29 (GGGHAG) coordinates FAD. An NAD(+)-binding site is contributed by 284-298 (GPRYCPSIEDKIHRF).

Belongs to the MnmG family. Homodimer. Heterotetramer of two MnmE and two MnmG subunits. Requires FAD as cofactor.

It is found in the cytoplasm. Its function is as follows. NAD-binding protein involved in the addition of a carboxymethylaminomethyl (cmnm) group at the wobble position (U34) of certain tRNAs, forming tRNA-cmnm(5)s(2)U34. The sequence is that of tRNA uridine 5-carboxymethylaminomethyl modification enzyme MnmG from Psychrobacter sp. (strain PRwf-1).